Here is a 467-residue protein sequence, read N- to C-terminus: MSKSLQLIKEHDVKWIDLRFTDTKGKQQHVTMPARDVDDDFFEYGKMFDGSSIAGWKGIEASDMILMPDDSTAVLDPFTEEPTLIIVCDIIEPSTMQGYDRDPRAIARRAEEYLKSTGIGDTAFFGPEPEFFIFDEVKYKSDISGSMFKIFSEQAAWNTDADFEGGNKGHRPGVKGGYFPVPPVDHDHEIRTAMCNALEEMGLKVEVHHHEVATAGQNEIGVSFNTLVAKADEVQTLKYCVHNVADAYGKTVTFMPKPLYGDNGSGMHVHMSIAKDGKNTFAGEGYAGLSDTALYFIGGIIKHGKALNGFTNPSTNSYKRLVPGFEAPVMLAYSARNRSASIRIPYVNSPKARRIEARFPDPSANPYLAFAALLMAGLDGIQNKIHPGDAADKNLYDLPPEEAKEIPQVCGSLKEALEELDKGRAFLTKGGVFSDDFIDAYLELKSEEEIKVRTFVHPLEYDLYYSV.

The GS beta-grasp domain maps to 11–95; it reads HDVKWIDLRF…IVCDIIEPST (85 aa). The region spanning 103 to 467 is the GS catalytic domain; the sequence is PRAIARRAEE…PLEYDLYYSV (365 aa). The Mg(2+) site is built by Glu128 and Glu130. Glu206 provides a ligand contact to ATP. Mg(2+) contacts are provided by Glu211 and Glu219. L-glutamate contacts are provided by residues 263-264 and Gly264; that span reads NG. Residue His268 coordinates Mg(2+). Residues 270–272 and Ser272 each bind ATP; that span reads HMS. Residues Arg320, Glu326, and Arg338 each contribute to the L-glutamate site. ATP contacts are provided by Arg338, Arg343, and Lys351. Glu356 lines the Mg(2+) pocket. Residue Arg358 participates in L-glutamate binding. Residue Tyr396 is modified to O-AMP-tyrosine.

Belongs to the glutamine synthetase family. As to quaternary structure, oligomer of 12 subunits arranged in the form of two hexameric ring. Mg(2+) serves as cofactor.

The protein localises to the cytoplasm. The catalysed reaction is L-glutamate + NH4(+) + ATP = L-glutamine + ADP + phosphate + H(+). With respect to regulation, the activity of this enzyme could be controlled by adenylation under conditions of abundant glutamine. Functionally, catalyzes the ATP-dependent biosynthesis of glutamine from glutamate and ammonia. The sequence is that of Glutamine synthetase from Azotobacter vinelandii.